The chain runs to 552 residues: Enhanced filamentous growth protein (552 aa).

3 disordered regions span residues 17–48 (NNGM…SQQQ), 70–93 (QGQP…QQQQ), and 121–180 (QLSQ…QPTP). The span at 121–151 (QLSQPQPQHYNGSNRNYTSAPSGAPIPSNST) shows a compositional bias: polar residues. The region spanning 204 to 310 (RVTTTMWEDE…RDIKRVIQTG (107 aa)) is the HTH APSES-type domain. A DNA-binding region (H-T-H motif) is located at residues 238–259 (GTKLLNVAQMTRGRRDGILKSE). Disordered stretches follow at residues 327–384 (TSAS…SPVN), 410–447 (QYGQ…QQQM), and 478–552 (SSYP…KEEK). Positions 340-381 (AAATTTAATAISKSSSGNGNSISATSGGSNVSGASGAGSTTS) are enriched in low complexity. The span at 419–434 (KNQNTPASQPGSTTND) shows a compositional bias: polar residues. Composition is skewed to low complexity over residues 435 to 447 (QYLQ…QQQM) and 478 to 504 (SSYP…DQQQ). A compositionally biased stretch (polar residues) spans 516-546 (SVHQSPQVQSLTQGSVHPSPQQHQANQSAST).

Belongs to the EFG1/PHD1/stuA family.

It is found in the nucleus. Functionally, putative transcription factor that stimulates pseudohyphal morphogenesis. This Candida albicans (Yeast) protein is Enhanced filamentous growth protein (EFG1).